An 83-amino-acid chain; its full sequence is RNA-binding protein Hfq (83 aa).

The region spanning 10 to 70 is the Sm domain; it reads DAFLNQVRKE…ISTVSPLKPV (61 aa).

The protein belongs to the Hfq family. As to quaternary structure, homohexamer.

RNA chaperone that binds small regulatory RNA (sRNAs) and mRNAs to facilitate mRNA translational regulation in response to envelope stress, environmental stress and changes in metabolite concentrations. Also binds with high specificity to tRNAs. The sequence is that of RNA-binding protein Hfq from Pelotomaculum thermopropionicum (strain DSM 13744 / JCM 10971 / SI).